A 327-amino-acid polypeptide reads, in one-letter code: Glycerol-3-phosphate dehydrogenase [NAD(P)+] (327 aa).

NADPH is bound by residues phenylalanine 13, arginine 34, and lysine 107. Positions 107 and 135 each coordinate sn-glycerol 3-phosphate. Alanine 139 serves as a coordination point for NADPH. Sn-glycerol 3-phosphate is bound by residues lysine 190, aspartate 243, serine 253, arginine 254, and asparagine 255. Lysine 190 (proton acceptor) is an active-site residue. Residue arginine 254 coordinates NADPH. NADPH is bound by residues valine 276 and glutamate 277.

It belongs to the NAD-dependent glycerol-3-phosphate dehydrogenase family.

Its subcellular location is the cytoplasm. The enzyme catalyses sn-glycerol 3-phosphate + NAD(+) = dihydroxyacetone phosphate + NADH + H(+). The catalysed reaction is sn-glycerol 3-phosphate + NADP(+) = dihydroxyacetone phosphate + NADPH + H(+). It functions in the pathway membrane lipid metabolism; glycerophospholipid metabolism. Its function is as follows. Catalyzes the reduction of the glycolytic intermediate dihydroxyacetone phosphate (DHAP) to sn-glycerol 3-phosphate (G3P), the key precursor for phospholipid synthesis. The sequence is that of Glycerol-3-phosphate dehydrogenase [NAD(P)+] from Rhizobium etli (strain ATCC 51251 / DSM 11541 / JCM 21823 / NBRC 15573 / CFN 42).